The chain runs to 323 residues: Annexin A3 (323 aa).

The residue at position 2 (A2) is an N-acetylalanine. Annexin repeat units follow at residues 18-89 (FNPS…ALVT), 90-161 (PPAV…ILAN), 173-245 (QLAR…AIVR), and 249-320 (NTPA…KICG). K177 is subject to N6-acetyllysine. The residue at position 267 (T267) is a Phosphothreonine.

This sequence belongs to the annexin family.

In terms of biological role, inhibitor of phospholipase A2, also possesses anti-coagulant properties. Also cleaves the cyclic bond of inositol 1,2-cyclic phosphate to form inositol 1-phosphate. The polypeptide is Annexin A3 (ANXA3) (Bos taurus (Bovine)).